A 468-amino-acid polypeptide reads, in one-letter code: MGHRWGFLIVFLGAVGLLGSGYGRQQPSETAAQRCFCQVSGYLDDCTCDVETIDRFNNYRLFPRLQKLLESDYFRYYKVNLKRPCPFWNDINQCGRRDCAVKPCQSDEIPDGIKSASYKYSEEANNLIEECEQAERLGAVDESLSEETQKAVLQWTKHDDSSDNFCEADDIQSPDAEYVDLLLNPERYTGYKGPDAWKIWNVIYEENCFKPQTIKRPLNPLASGQGKSEENTFYSWLEGLCVEKRAFYRLISGLHASINVHLSARYLLQDTWLEKKWGHNITEFQQRFDGILTEGEGPRRLKNLYFLYLIELRALSKVVPFFERPDFQLFTGNKVQDAENKMLLLDILHEIKSFPLHFDENSFFAGDKKEANKLKEDFRLHFRNISRIMDCVGCLKCRLWGKLQTQGLGTALKILFSEKLIANMPESGPSYEFHLTRQEIVSLFNAFGRISTSVKELENFRNLLQNIH.

Residues 1–23 (MGHRWGFLIVFLGAVGLLGSGYG) form the signal peptide. 8 disulfide bridges follow: Cys35–Cys48, Cys37–Cys46, Cys85–Cys391, Cys94–Cys99, Cys94–Cys131, Cys99–Cys104, Cys208–Cys241, and Cys394–Cys397. Ser106, Ser143, and Ser145 each carry phosphoserine. Arg187, Thr189, and Trp200 together coordinate FAD. Positions 252 and 255 each coordinate FAD. An N-linked (GlcNAc...) asparagine glycan is attached at Asn280. FAD is bound by residues Arg287 and Arg300. Asn384 carries an N-linked (GlcNAc...) asparagine glycan.

The protein belongs to the EROs family. Predominantly monomer. May function both as a monomer and a homodimer. Interacts with PDILT. Interacts with ERP44; the interaction results in retention of ERO1A in the endoplasmic reticulum. FAD serves as cofactor. The Cys-94/Cys-99 and Cys-394/Cys-397 disulfide bonds constitute the redox-active center. The Cys-94/Cys-99 disulfide bond may accept electron from P4HB and funnel them to the active site disulfide Cys-394/Cys-397. The regulatory Cys-99/Cys-104 disulfide bond stabilizes the other regulatory bond Cys-94/Cys-131. Post-translationally, phosphorylated on Ser-145 by FAM20C in the Golgi which increases its enzymatic activity. Phosphorylation is induced by lactation. It is also induced by hypoxia and reductive stress.

Its subcellular location is the endoplasmic reticulum membrane. The protein localises to the golgi apparatus lumen. It is found in the secreted. It localises to the cell projection. The protein resides in the dendrite. Enzyme activity is tightly regulated to prevent the accumulation of reactive oxygen species in the endoplasmic reticulum. Reversibly down-regulated by the formation of disulfide bonds between the active site Cys-94 and Cys-131, and between Cys-99 and Cys-104. Glutathione may be required to regulate its activity in the endoplasmic reticulum. Functionally, oxidoreductase involved in disulfide bond formation in the endoplasmic reticulum. Efficiently reoxidizes P4HB/PDI, the enzyme catalyzing protein disulfide formation, in order to allow P4HB to sustain additional rounds of disulfide formation. Following P4HB reoxidation, passes its electrons to molecular oxygen via FAD, leading to the production of reactive oxygen species (ROS) in the cell. Required for the proper folding of immunoglobulins. Plays an important role in ER stress-induced, CHOP-dependent apoptosis by activating the inositol 1,4,5-trisphosphate receptor IP3R1. This Sus scrofa (Pig) protein is ERO1-like protein alpha.